A 229-amino-acid chain; its full sequence is Vacuolar protein sorting-associated protein 24 homolog 1 (229 aa).

Positions 15-60 form a coiled coil; it reads KQLLRDWQRKLRQECRNIERQIRDIQKEERNVQKAIKEAAKRNDMV. The segment at 193-215 is disordered; it reads VPAQKASTSREEEAVAEGVDDEE. The segment covering 206–215 has biased composition (acidic residues); that stretch reads AVAEGVDDEE.

The protein belongs to the SNF7 family. As to quaternary structure, component of the endosomal sorting required for transport complex III (ESCRT-III), composed at least of VPS2, VPS20, VPS24 and VPS32. Interacts with SKD1.

The protein resides in the endosome. Component of the ESCRT-III complex, which is required for multivesicular bodies (MVBs) formation and sorting of endosomal cargo proteins into MVBs. The ESCRT-III complex is probably involved in the concentration of MVB cargo. This chain is Vacuolar protein sorting-associated protein 24 homolog 1 (VPS24-1), found in Arabidopsis thaliana (Mouse-ear cress).